We begin with the raw amino-acid sequence, 366 residues long: Cytochrome c mitochondrial import factor CYC2 (366 aa).

Residues 1 to 50 constitute a mitochondrion transit peptide; sequence MLWKNYVLSSSRITRRLHKSPRKSSFSKNFFITGCLLTVGAVSSYLTYRY. An FAD-binding FR-type domain is found at 63–184; sequence SYFVKYKISH…RGPFIDYEFP (122 aa).

FAD serves as cofactor.

The protein localises to the mitochondrion inner membrane. Its function is as follows. Redox component that participates in c-type cytochrome biogenesis in the mitochondrial intermembrane space. May play a role in the reduction of heme prior to its ligation to apocytochrome c by cytochrome c heme lyase. Has oxidoreductase activity in vitro. This chain is Cytochrome c mitochondrial import factor CYC2 (CYC2), found in Saccharomyces cerevisiae (strain ATCC 204508 / S288c) (Baker's yeast).